Reading from the N-terminus, the 732-residue chain is Asp/Glu-specific dipeptidyl-peptidase (732 aa).

The signal sequence occupies residues 1 to 18 (MRIALVATLVLTSGIANA). Catalysis depends on charge relay system residues His80, Asp215, and Ser666.

The protein belongs to the peptidase S46 family.

In terms of biological role, catalyzes the removal of dipeptides from the N-terminus of oligopeptides. Shows a strict specificity for acidic residues (Asp or Glu) in the P1 position, and has probably a hydrophobic residue preference at the P2 position. Preferentially cleaves the synthetic substrate Leu-Glu-methylcoumaryl-7-amide (Leu-Glu-MCA) as compared to Leu-Asp-MCA. The protein is Asp/Glu-specific dipeptidyl-peptidase (dpp11) of Shewanella putrefaciens (strain CN-32 / ATCC BAA-453).